Consider the following 335-residue polypeptide: Trans-1,2-dihydrobenzene-1,2-diol dehydrogenase (335 aa).

Belongs to the Gfo/Idh/MocA family. In terms of assembly, homodimer. In terms of tissue distribution, liver, lens, spleen, kidney and small intestine.

The enzyme catalyses (1R,2R)-1,2-dihydrobenzene-1,2-diol + NADP(+) = catechol + NADPH + H(+). The catalysed reaction is D-xylose + NADP(+) = D-xylono-1,5-lactone + NADPH + H(+). Its activity is regulated as follows. Strongly inhibited by isoascorbic acid, 4-hydroxyacetophenone and chloromercuriphenylsulphonate. Stimulated by various salts. The protein is Trans-1,2-dihydrobenzene-1,2-diol dehydrogenase (DHDH) of Sus scrofa (Pig).